Consider the following 58-residue polypeptide: Photosystem II reaction center protein K (58 aa).

Residues 1–21 constitute a propeptide that is removed on maturation; it reads MFDLYLKNLLDLSDSGTVVLA. Residues 29 to 49 traverse the membrane as a helical segment; it reads IFDPIVDVLPVIPVFFLLLAF.

It belongs to the PsbK family. In terms of assembly, PSII is composed of 1 copy each of membrane proteins PsbA, PsbB, PsbC, PsbD, PsbE, PsbF, PsbH, PsbI, PsbJ, PsbK, PsbL, PsbM, PsbT, PsbX, PsbY, PsbZ, Psb30/Ycf12, at least 3 peripheral proteins of the oxygen-evolving complex and a large number of cofactors. It forms dimeric complexes.

It localises to the plastid. It is found in the chloroplast thylakoid membrane. In terms of biological role, one of the components of the core complex of photosystem II (PSII). PSII is a light-driven water:plastoquinone oxidoreductase that uses light energy to abstract electrons from H(2)O, generating O(2) and a proton gradient subsequently used for ATP formation. It consists of a core antenna complex that captures photons, and an electron transfer chain that converts photonic excitation into a charge separation. This Zygnema circumcarinatum (Green alga) protein is Photosystem II reaction center protein K.